The sequence spans 457 residues: Reticulon-like protein B18 (457 aa).

The tract at residues 94-183 is disordered; that stretch reads AAVTARRSKT…SPSSDQPQDV (90 aa). Basic and acidic residues predominate over residues 124–136; that stretch reads LRSEAMVDTKENT. A compositionally biased stretch (basic residues) spans 149–163; that stretch reads NQRKQKKLGRSKKEK. Low complexity predominate over residues 166 to 183; that stretch reads SVPLLASPSPSSDQPQDV. The region spanning 195-385 is the Reticulon domain; that stretch reads ISDLIMWRDV…AFWNLTSLKT (191 aa). The next 4 membrane-spanning stretches (helical) occupy residues 208–228, 230–250, 314–334, and 377–397; these read TLWFGFGCICFLSTCFAAKGF, FSVFSAISYLGLLFLGVSFLS, YGYLITLWRLCAFGFFLSFTI, and FWNLTSLKTRFIAVFIIVVVI. A disordered region spans residues 407 to 457; that stretch reads DSEDEEEKKQQEKTHPEQQKSPEDKSTSPRSAEEEQALVLVAETKAPKKLY. Residues 413 to 439 show a composition bias toward basic and acidic residues; sequence EKKQQEKTHPEQQKSPEDKSTSPRSAE.

Its subcellular location is the endoplasmic reticulum membrane. The protein is Reticulon-like protein B18 (RTNLB18) of Arabidopsis thaliana (Mouse-ear cress).